We begin with the raw amino-acid sequence, 131 residues long: Profilin-2 (131 aa).

An intrachain disulfide couples C13 to C115. Positions 81–97 match the Involved in PIP2 interaction motif; the sequence is AVIRGKKGSGGITVKKT. T111 carries the phosphothreonine modification.

It belongs to the profilin family. Occurs in many kinds of cells as a complex with monomeric actin in a 1:1 ratio. Phosphorylated by MAP kinases. As to expression, pollen specific.

The protein resides in the cytoplasm. The protein localises to the cytoskeleton. Its function is as follows. Binds to actin and affects the structure of the cytoskeleton. At high concentrations, profilin prevents the polymerization of actin, whereas it enhances it at low concentrations. By binding to PIP2, it inhibits the formation of IP3 and DG. The chain is Profilin-2 (PRO2) from Zea mays (Maize).